Consider the following 599-residue polypeptide: Sulfite reductase [NADPH] flavoprotein alpha-component (599 aa).

The region spanning 64 to 202 (ITIISASQTG…AASEWRARVV (139 aa)) is the Flavodoxin-like domain. Residues 70 to 75 (SQTGNA), 117 to 120 (STQG), and 153 to 162 (LGDSSYEFFC) each bind FMN. One can recognise an FAD-binding FR-type domain in the interval 234–448 (DAPLVASLSV…IEHNDNFRLP (215 aa)). FAD is bound by residues Thr322, Ala356, 386-389 (RLYS), 404-406 (TVG), Tyr410, and 419-422 (GGAS). NADP(+)-binding positions include 519–520 (SR), 525–529 (KVYVQ), and Asp561. FAD is bound at residue Tyr599.

It belongs to the NADPH-dependent sulphite reductase flavoprotein subunit CysJ family. This sequence in the N-terminal section; belongs to the flavodoxin family. In the C-terminal section; belongs to the flavoprotein pyridine nucleotide cytochrome reductase family. Alpha(8)-beta(8). The alpha component is a flavoprotein, the beta component is a hemoprotein. Requires FAD as cofactor. FMN is required as a cofactor.

The enzyme catalyses hydrogen sulfide + 3 NADP(+) + 3 H2O = sulfite + 3 NADPH + 4 H(+). It participates in sulfur metabolism; hydrogen sulfide biosynthesis; hydrogen sulfide from sulfite (NADPH route): step 1/1. Component of the sulfite reductase complex that catalyzes the 6-electron reduction of sulfite to sulfide. This is one of several activities required for the biosynthesis of L-cysteine from sulfate. The flavoprotein component catalyzes the electron flow from NADPH -&gt; FAD -&gt; FMN to the hemoprotein component. This is Sulfite reductase [NADPH] flavoprotein alpha-component from Escherichia coli O157:H7.